Here is a 379-residue protein sequence, read N- to C-terminus: Heme chaperone HemW (379 aa).

Positions 1–232 constitute a Radical SAM core domain; sequence MLQKPNSAYF…MDILAKNGYN (232 aa). Tyrosine 9 serves as a coordination point for S-adenosyl-L-methionine. [4Fe-4S] cluster contacts are provided by cysteine 15, cysteine 19, and cysteine 22. Residues glycine 60, 61–62, glutamate 93, glutamine 120, arginine 132, and aspartate 157 contribute to the S-adenosyl-L-methionine site; that span reads GT.

Belongs to the anaerobic coproporphyrinogen-III oxidase family. HemW subfamily. Homodimer.

The protein localises to the cytoplasm. It localises to the cell membrane. Functionally, could serve in the delivery of heme to a membrane-localized target protein. Binds one molecule of heme per monomer, possibly covalently; heme and Fe-S cluster binding are independent. Incubation with the reductant sodium dithionite increases binding. Does not have coproporphyrinogen III dehydrogenase activity in vitro, does not complement an E.coli hemN deletion in vivo. Binds 1 Fe-S cluster, it is probably [4Fe-4S]. The cluster is coordinated with 3 cysteines and an exchangeable S-adenosyl-L-methionine; only dimeric protein has the cluster. The sequence is that of Heme chaperone HemW from Lactococcus lactis subsp. lactis (strain IL1403) (Streptococcus lactis).